An 83-amino-acid chain; its full sequence is MRKGIHPDYQEVVFMDSATGAKFVAGSTLKPEETIEFEGKTYPLVRVEISSDSHPFYTGKQKFAQADGRIEKFNKKYGMSSKN.

This sequence belongs to the bacterial ribosomal protein bL31 family. Type B subfamily. In terms of assembly, part of the 50S ribosomal subunit.

The protein is Large ribosomal subunit protein bL31B of Lactobacillus johnsonii (strain CNCM I-12250 / La1 / NCC 533).